Here is a 1847-residue protein sequence, read N- to C-terminus: Peripheral-type benzodiazepine receptor-associated protein 1 (1847 aa).

3 disordered regions span residues 57–81, 282–318, and 560–626; these read EESS…GTET, NQRE…EDDV, and SGPK…DTAS. Composition is skewed to low complexity over residues 294–310 and 600–613; these read GSTA…GAPG and SLSN…IHNS. In terms of domain architecture, SH3 1 spans 651-718; that stretch reads ARIQVFLARY…PSNFVERVSD (68 aa). Residues 728 to 787 are disordered; sequence ELADSSHSSGPELSFLSGGGGGCSSGGQSSGGRSQPRPEEEATGDELSLSPPPEGLGEPL. The segment covering 744–757 has biased composition (gly residues); the sequence is SGGGGGCSSGGQSS. Fibronectin type-III domains lie at 789–880, 882–974, and 979–1077; these read VPYP…AGAG, VPSQ…TLPA, and APLD…PALA. Disordered stretches follow at residues 1107–1174, 1191–1215, 1240–1307, 1322–1478, and 1514–1616; these read LGYT…EGPD, DAGP…VCHR, NSLV…ILEQ, FSIP…ESSL, and PTDG…SHQD. The segment covering 1122 to 1133 has biased composition (polar residues); sequence TQDSPASLSTEM. Residues 1203-1215 are compositionally biased toward basic and acidic residues; the sequence is LTQKEPSTEVCHR. The segment covering 1253 to 1266 has biased composition (acidic residues); sequence DIQEEEEEEEEEEE. Polar residues predominate over residues 1272–1284; the sequence is WSFQKQVAGNSIG. Acidic residues-rich tracts occupy residues 1296 to 1305 and 1325 to 1335; these read CETDSDEEIL and PEEEEEEDEEE. The segment covering 1340–1352 has biased composition (low complexity); it reads PGPSSSSQDPSQP. Basic and acidic residues-rich tracts occupy residues 1412 to 1421 and 1546 to 1578; these read RPQDPREHCS and AWEK…ESRG. The SH3 2 domain maps to 1617–1685; that stretch reads LPLRVFVALF…PCNMVAEVAV (69 aa). Disordered regions lie at residues 1701–1747 and 1818–1847; these read PPNV…PGPP and LEGP…RVQC. One can recognise an SH3 3 domain in the interval 1756–1823; the sequence is KTSRPMVAAF…PSNFLEGPGP (68 aa).

Belongs to the RIMBP family. Interacts with RIMS1 and RIMS2. Interacts with TSPO. Interacts with CACNA1A. In terms of tissue distribution, specifically expressed in brain. High expression level in the limbic system such as the nucleus accumbens, septum, and hippocampus, as well as on the cerebellum and pineal gland. Abundant in the CA1 region of the hippocampus.

It localises to the cytoplasm. The protein localises to the mitochondrion. Its function is as follows. Required for synaptic transmission regulation. It probably controls the recruitement of voltage-gated calcium channels to the presynaptic membrane, and modulates neurotransmitter release. This chain is Peripheral-type benzodiazepine receptor-associated protein 1, found in Rattus norvegicus (Rat).